A 177-amino-acid polypeptide reads, in one-letter code: Large ribosomal subunit protein uL6 (177 aa).

The protein belongs to the universal ribosomal protein uL6 family. In terms of assembly, part of the 50S ribosomal subunit.

Functionally, this protein binds to the 23S rRNA, and is important in its secondary structure. It is located near the subunit interface in the base of the L7/L12 stalk, and near the tRNA binding site of the peptidyltransferase center. In Glaesserella parasuis serovar 5 (strain SH0165) (Haemophilus parasuis), this protein is Large ribosomal subunit protein uL6.